The sequence spans 214 residues: Cytochrome b (214 aa).

Transmembrane regions (helical) follow at residues 31 to 51 (FGSM…FLAF), 75 to 96 (WIMQ…YIHI), 111 to 131 (WVSG…GYVL), and 176 to 196 (FFAL…IHIL). 2 residues coordinate heme b: His-81 and His-95. Heme b is bound by residues His-180 and His-194. His-199 is a binding site for a ubiquinone.

It belongs to the cytochrome b family. As to quaternary structure, the cytochrome bc1 complex contains 3 respiratory subunits (MT-CYB, CYC1 and UQCRFS1), 2 core proteins (UQCRC1 and UQCRC2) and probably 6 low-molecular weight proteins. Heme b serves as cofactor.

The protein localises to the mitochondrion inner membrane. Functionally, component of the ubiquinol-cytochrome c reductase complex (complex III or cytochrome b-c1 complex) that is part of the mitochondrial respiratory chain. The b-c1 complex mediates electron transfer from ubiquinol to cytochrome c. Contributes to the generation of a proton gradient across the mitochondrial membrane that is then used for ATP synthesis. In Gloydius blomhoffii (Mamushi), this protein is Cytochrome b (MT-CYB).